The chain runs to 139 residues: mRNA stability protein mug134 (139 aa).

The tract at residues 83 to 139 is disordered; sequence IGKEIPSPDTIPHRVVSAGSPNKEPSLHTKRPSESSPSGASSRRESVTRHDLESNEN. The span at 124–139 shows a compositional bias: basic and acidic residues; it reads SRRESVTRHDLESNEN.

Belongs to the endosulfine family.

It is found in the nucleus. Its subcellular location is the cytoplasm. Plays an essential role in initiation of the G0 program by preventing the degradation of specific nutrient-regulated mRNAs via the 5'-3' mRNA decay pathway. The polypeptide is mRNA stability protein mug134 (mug134) (Schizosaccharomyces pombe (strain 972 / ATCC 24843) (Fission yeast)).